Here is a 383-residue protein sequence, read N- to C-terminus: Acetylornithine deacetylase (383 aa).

Histidine 80 contacts Zn(2+). Residue aspartate 82 is part of the active site. Aspartate 112 contributes to the Zn(2+) binding site. The active site involves glutamate 144. Residues glutamate 145, glutamate 169, and histidine 355 each contribute to the Zn(2+) site.

The protein belongs to the peptidase M20A family. ArgE subfamily. As to quaternary structure, homodimer. Zn(2+) is required as a cofactor. Requires Co(2+) as cofactor. It depends on glutathione as a cofactor.

The protein localises to the cytoplasm. The catalysed reaction is N(2)-acetyl-L-ornithine + H2O = L-ornithine + acetate. The protein operates within amino-acid biosynthesis; L-arginine biosynthesis; L-ornithine from N(2)-acetyl-L-ornithine (linear): step 1/1. Its function is as follows. Catalyzes the hydrolysis of the amide bond of N(2)-acetylated L-amino acids. Cleaves the acetyl group from N-acetyl-L-ornithine to form L-ornithine, an intermediate in L-arginine biosynthesis pathway, and a branchpoint in the synthesis of polyamines. This chain is Acetylornithine deacetylase, found in Shigella flexneri serotype 5b (strain 8401).